The primary structure comprises 342 residues: Foldase protein PrsA (342 aa).

Residues 1–22 (MVSVKKIVASALVGVLMFSAVG) form the signal peptide. Residue Cys-23 is the site of N-palmitoyl cysteine attachment. The S-diacylglycerol cysteine moiety is linked to residue Cys-23. Residues 189 to 284 (DSGVLTKHLL…FGYHIIQAGA (96 aa)) enclose the PpiC domain.

It belongs to the PrsA family.

It localises to the cell membrane. The catalysed reaction is [protein]-peptidylproline (omega=180) = [protein]-peptidylproline (omega=0). Functionally, plays a major role in protein secretion by helping the post-translocational extracellular folding of several secreted proteins. The chain is Foldase protein PrsA from Clostridium perfringens (strain ATCC 13124 / DSM 756 / JCM 1290 / NCIMB 6125 / NCTC 8237 / Type A).